Reading from the N-terminus, the 342-residue chain is NLP effector protein Pc107869 (342 aa).

The signal sequence occupies residues 1–19 (MKTGFFLFAACAALVAVQA). A glycan (N-linked (GlcNAc...) asparagine) is linked at asparagine 24. A disordered region spans residues 41–125 (APRTKAPPTK…PTPDPGPWEA (85 aa)). Over residues 55 to 75 (QQSSLSGSQEQQQEQIETPAP) the composition is skewed to low complexity. Positions 93-121 (TPAPTPAPTPAPTPAPTPAPTPAPTPDPG) are enriched in pro residues. Positions 226-232 (GHRHDWE) match the Hepta-peptide GHRHDWE motif motif.

The protein belongs to the Necrosis inducing protein (NPP1) family.

It localises to the secreted. Functionally, secreted effector that contributes strongly to virulence during infection by P.capsici. Induces cell death in the Solanaceae, including Nicotiana benthamiana. This chain is NLP effector protein Pc107869, found in Phytophthora capsici.